The primary structure comprises 157 residues: Ribosome maturation factor RimP (157 aa).

The protein belongs to the RimP family.

It localises to the cytoplasm. Required for maturation of 30S ribosomal subunits. The chain is Ribosome maturation factor RimP from Synechococcus sp. (strain JA-3-3Ab) (Cyanobacteria bacterium Yellowstone A-Prime).